The chain runs to 52 residues: ATP synthase F(0) complex subunit 8 (52 aa).

A helical transmembrane segment spans residues 10–30; the sequence is LMTHLWAWLMLYLTTQKIKTF.

This sequence belongs to the ATPase protein 8 family. Component of the ATP synthase complex composed at least of ATP5F1A/subunit alpha, ATP5F1B/subunit beta, ATP5MC1/subunit c (homooctomer), MT-ATP6/subunit a, MT-ATP8/subunit 8, ATP5ME/subunit e, ATP5MF/subunit f, ATP5MG/subunit g, ATP5MK/subunit k, ATP5MJ/subunit j, ATP5F1C/subunit gamma, ATP5F1D/subunit delta, ATP5F1E/subunit epsilon, ATP5PF/subunit F6, ATP5PB/subunit b, ATP5PD/subunit d, ATP5PO/subunit OSCP. ATP synthase complex consists of a soluble F(1) head domain (subunits alpha(3) and beta(3)) - the catalytic core - and a membrane F(0) domain - the membrane proton channel (subunits c, a, 8, e, f, g, k and j). These two domains are linked by a central stalk (subunits gamma, delta, and epsilon) rotating inside the F1 region and a stationary peripheral stalk (subunits F6, b, d, and OSCP).

The protein resides in the mitochondrion membrane. Functionally, subunit 8, of the mitochondrial membrane ATP synthase complex (F(1)F(0) ATP synthase or Complex V) that produces ATP from ADP in the presence of a proton gradient across the membrane which is generated by electron transport complexes of the respiratory chain. ATP synthase complex consist of a soluble F(1) head domain - the catalytic core - and a membrane F(1) domain - the membrane proton channel. These two domains are linked by a central stalk rotating inside the F(1) region and a stationary peripheral stalk. During catalysis, ATP synthesis in the catalytic domain of F(1) is coupled via a rotary mechanism of the central stalk subunits to proton translocation. In vivo, can only synthesize ATP although its ATP hydrolase activity can be activated artificially in vitro. Part of the complex F(0) domain. The sequence is that of ATP synthase F(0) complex subunit 8 from Lycodon semicarinatus (Ryukyu odd-tooth snake).